Here is a 130-residue protein sequence, read N- to C-terminus: Phosphomevalonate dehydratase small subunit (130 aa).

S62 acts as the Proton acceptor in catalysis.

Belongs to the AcnX type II small subunit family. As to quaternary structure, heterodimer composed of a large subunit (PMDh-L) and a small subunit (PMDh-S).

It carries out the reaction (R)-5-phosphomevalonate = (2E)-3-methyl-5-phosphooxypent-2-enoate + H2O. It functions in the pathway isoprenoid biosynthesis; isopentenyl diphosphate biosynthesis via mevalonate pathway. Functionally, component of a hydro-lyase that catalyzes the dehydration of mevalonate 5-phosphate (MVA5P) to form trans-anhydromevalonate 5-phosphate (tAHMP). Involved in the archaeal mevalonate (MVA) pathway, which provides fundamental precursors for isoprenoid biosynthesis, such as isopentenyl diphosphate (IPP) and dimethylallyl diphosphate (DMAPP). The polypeptide is Phosphomevalonate dehydratase small subunit (Thermococcus onnurineus (strain NA1)).